The following is a 311-amino-acid chain: Ribonuclease HIII (311 aa).

The 217-residue stretch at 95-311 folds into the RNase H type-2 domain; that stretch reads MSIVGSDEVG…NTEKAFRLLK (217 aa). Residues D101, E102, and D206 each coordinate a divalent metal cation.

The protein belongs to the RNase HII family. RnhC subfamily. Requires Mn(2+) as cofactor. Mg(2+) serves as cofactor.

It localises to the cytoplasm. It catalyses the reaction Endonucleolytic cleavage to 5'-phosphomonoester.. Functionally, endonuclease that specifically degrades the RNA of RNA-DNA hybrids. The protein is Ribonuclease HIII of Bacillus thuringiensis subsp. konkukian (strain 97-27).